A 1077-amino-acid polypeptide reads, in one-letter code: MLQHATITKMTDFSDLDDDDIVGLLDQDVNRCVETSVTRHKLAMQRDLTGKVLDGEKRYYEEVVTSVTYKPTHHQLRYENLNTYLYPTNYEVREYQFNIVHRALFENVLCAIPTGMGKTFIASTVMLNYYRWTVGTKIIFTAPTRPLVAQQIKACLGITGIPYNDTAILLDKSRKHREQIWSEKRVFFATPQVVENDLKRGALNPKDVVLLVIDEAHRARGSYAYVELTKFIDRFNTSYRVLALTATPATDLEGVQEVVDNLQISKIELRTEESEDIVRYMKRRDTEEVIVPLIPEIEDIIEQLGIAITPVLKEAVQLGLYDDCEPVNINAFIAMQQSQKILANSSIPEGVKWKNYFILQLLCHVGHMLKRLKIYGIQTFYTYFDNKYREFTTKYGIGKSTNKTAASFYYSSILKNITKTCQAYTANPSFLGHGKLYRVRDELSTFFASAGDDSRVIIFTELRESALELVKCVDNMNDRFIRPHIFIGQAKGKESFDDGEYLRKHAPKGRKKVDRIRRLEEEKRLADEKLRKKEEEKLARTARRTGSSEEAQISGMTQKQQKEVISLFKKGDYNVLVCTSIGEEGLDIGEVDMIICYDTTSSPIKNIQRMGRTGRKRDGRIVLLLSDNEPRKFEQAMEDYAQLQRLIGEESLNYKVTDRIIPKGINPQCQKEFITISEKNSAVNGMEDADSVIKYATQAMLGKLDKRKAVKKSTGKAAPKRFFMPDDVETGIVPAMKLVKSYKYTENGEAFPVAESVKGRRPKSKDTLLDRLEYDSLESELSSPEKATKSQNVVEIRPKLLSDILLKDEDTLHFEHSSSCPKVDSLASVTTLSSDNKSTPDQLKRSQSDNGFGIPPKRQRLCYDTSANCSSTDTHLMEAQSKNKDNPANRKTGEPHYKLEVSPLKREEDDRDVIPQNIAVKPEVPHLTQECLTTGRVYKSEFSKYDGFLTVSERRYFEQNYSPVHLVSLEPRPVFSRSRNRVAIVPHSERVQRLINIFAAMDTDDKVHIIDMHRKHALARRTVHGGPTENSDLLQPSSDGIIVPNDDIRLFSLRPRATDFEDMLEDDEGLSELLDSD.

Positions 99–266 constitute a Helicase ATP-binding domain; that stretch reads IVHRALFENV…EVVDNLQISK (168 aa). 112–119 contacts ATP; sequence IPTGMGKT. A DEAH box motif is present at residues 214–217; sequence DEAH. Residues 511–660 form the Helicase C-terminal domain; sequence KKVDRIRRLE…SLNYKVTDRI (150 aa). Disordered stretches follow at residues 536–556 and 831–859; these read EKLARTARRTGSSEEAQISGM and TLSSDNKSTPDQLKRSQSDNGFGIPPKRQ. Positions 831-841 are enriched in polar residues; it reads TLSSDNKSTPD.

This sequence belongs to the DEAD box helicase family. DEAH subfamily. FANCM sub-subfamily. Interacts with the MHF histone-fold complex to form the FANCM-MHF complex.

It localises to the nucleus. The catalysed reaction is ATP + H2O = ADP + phosphate + H(+). In terms of biological role, ATP-dependent DNA helicase involved in DNA damage repair by homologous recombination and in genome maintenance. Capable of unwinding D-loops. Plays a role in limiting crossover recombinants during mitotic DNA double-strand break (DSB) repair. Component of a FANCM-MHF complex which promotes gene conversion at blocked replication forks, probably by reversal of the stalled fork. The sequence is that of ATP-dependent DNA helicase MPH1 from Eremothecium gossypii (strain ATCC 10895 / CBS 109.51 / FGSC 9923 / NRRL Y-1056) (Yeast).